The primary structure comprises 40 residues: Photosystem II reaction center protein J (40 aa).

Residues 8–28 (IPLWLVGTVAGILVIGLIGIF) form a helical membrane-spanning segment.

It belongs to the PsbJ family. PSII is composed of 1 copy each of membrane proteins PsbA, PsbB, PsbC, PsbD, PsbE, PsbF, PsbH, PsbI, PsbJ, PsbK, PsbL, PsbM, PsbT, PsbX, PsbY, PsbZ, Psb30/Ycf12, at least 3 peripheral proteins of the oxygen-evolving complex and a large number of cofactors. It forms dimeric complexes.

Its subcellular location is the plastid. The protein resides in the chloroplast thylakoid membrane. Functionally, one of the components of the core complex of photosystem II (PSII). PSII is a light-driven water:plastoquinone oxidoreductase that uses light energy to abstract electrons from H(2)O, generating O(2) and a proton gradient subsequently used for ATP formation. It consists of a core antenna complex that captures photons, and an electron transfer chain that converts photonic excitation into a charge separation. This Gnetum parvifolium (Small-leaved jointfir) protein is Photosystem II reaction center protein J.